A 455-amino-acid polypeptide reads, in one-letter code: Squamosa promoter-binding-like protein 16 (455 aa).

An SBP-type zinc finger spans residues 115–192; it reads CPSCAVDGCK…DGHNRRRRKP (78 aa). Residues C118, C123, C140, H143, C159, C162, H166, and C178 each coordinate Zn(2+). Positions 175 to 191 match the Bipartite nuclear localization signal motif; that stretch reads KRSCRKRLDGHNRRRRK. Residues 182–204 form a disordered region; sequence LDGHNRRRRKPQPDPMNSASYLA.

In terms of tissue distribution, expressed in young panicles.

The protein resides in the nucleus. Its function is as follows. Trans-acting factor that binds specifically to the consensus nucleotide sequence 5'-TNCGTACAA-3'. May be involved in panicle development. The polypeptide is Squamosa promoter-binding-like protein 16 (SPL16) (Oryza sativa subsp. japonica (Rice)).